The sequence spans 91 residues: UPF0512 protein M (91 aa).

It belongs to the UPF0512 family.

The chain is UPF0512 protein M from Dictyostelium discoideum (Social amoeba).